A 213-amino-acid chain; its full sequence is Cytochrome c biogenesis ATP-binding export protein CcmA (213 aa).

An ABC transporter domain is found at 8-213 (LQATALTCER…RDIDLGQWAA (206 aa)). 40–47 (GPNGSGKT) lines the ATP pocket.

This sequence belongs to the ABC transporter superfamily. CcmA exporter (TC 3.A.1.107) family. As to quaternary structure, the complex is composed of two ATP-binding proteins (CcmA) and two transmembrane proteins (CcmB).

The protein resides in the cell inner membrane. It carries out the reaction heme b(in) + ATP + H2O = heme b(out) + ADP + phosphate + H(+). In terms of biological role, part of the ABC transporter complex CcmAB involved in the biogenesis of c-type cytochromes; once thought to export heme, this seems not to be the case, but its exact role is uncertain. Responsible for energy coupling to the transport system. In Pseudomonas savastanoi pv. phaseolicola (strain 1448A / Race 6) (Pseudomonas syringae pv. phaseolicola (strain 1448A / Race 6)), this protein is Cytochrome c biogenesis ATP-binding export protein CcmA.